Consider the following 235-residue polypeptide: 7-cyano-7-deazaguanine synthase (235 aa).

8–18 (FSGGQDSTTCL) provides a ligand contact to ATP. Zn(2+) is bound by residues Cys-187, Cys-196, Cys-199, and Cys-202.

It belongs to the QueC family. It depends on Zn(2+) as a cofactor.

It carries out the reaction 7-carboxy-7-deazaguanine + NH4(+) + ATP = 7-cyano-7-deazaguanine + ADP + phosphate + H2O + H(+). It participates in purine metabolism; 7-cyano-7-deazaguanine biosynthesis. Catalyzes the ATP-dependent conversion of 7-carboxy-7-deazaguanine (CDG) to 7-cyano-7-deazaguanine (preQ(0)). The sequence is that of 7-cyano-7-deazaguanine synthase from Aeromonas hydrophila subsp. hydrophila (strain ATCC 7966 / DSM 30187 / BCRC 13018 / CCUG 14551 / JCM 1027 / KCTC 2358 / NCIMB 9240 / NCTC 8049).